A 270-amino-acid chain; its full sequence is uncharacterized protein (270 aa).

The next 10 membrane-spanning stretches (helical) occupy residues 12–32 (AAIV…RNVG), 35–55 (TLSV…PFCL), 64–84 (TLLG…AAIQ), 88–108 (VAMA…LSVL), 117–137 (TLLA…PYAE), 138–158 (LTFG…VFVL), 171–191 (ITFY…LMFG), 194–214 (GSWL…FVLF), 226–246 (APIL…FYFG), and 248–268 (TLTL…LIAW). 2 EamA domains span residues 19–133 (VLMG…LMLT) and 150–269 (LSYA…IAWR).

This sequence belongs to the EamA transporter family.

Its subcellular location is the cell membrane. This is an uncharacterized protein from Archaeoglobus fulgidus (strain ATCC 49558 / DSM 4304 / JCM 9628 / NBRC 100126 / VC-16).